The following is a 309-amino-acid chain: ADP-L-glycero-D-manno-heptose-6-epimerase (309 aa).

Residues Phe10–Ile11, Asp31–Asn32, Lys38, Lys53, Glu75–Ser79, and Asn92 each bind NADP(+). Residue Tyr140 is the Proton acceptor of the active site. Lys144 is a binding site for NADP(+). A substrate-binding site is contributed by Asn169. 2 residues coordinate NADP(+): Val170 and Lys178. Lys178 (proton acceptor) is an active-site residue. Substrate is bound by residues Ser180, His187, Phe201–Ser204, Arg209, and Tyr272.

The protein belongs to the NAD(P)-dependent epimerase/dehydratase family. HldD subfamily. In terms of assembly, homopentamer. Requires NADP(+) as cofactor.

The catalysed reaction is ADP-D-glycero-beta-D-manno-heptose = ADP-L-glycero-beta-D-manno-heptose. It functions in the pathway nucleotide-sugar biosynthesis; ADP-L-glycero-beta-D-manno-heptose biosynthesis; ADP-L-glycero-beta-D-manno-heptose from D-glycero-beta-D-manno-heptose 7-phosphate: step 4/4. Its function is as follows. Catalyzes the interconversion between ADP-D-glycero-beta-D-manno-heptose and ADP-L-glycero-beta-D-manno-heptose via an epimerization at carbon 6 of the heptose. The sequence is that of ADP-L-glycero-D-manno-heptose-6-epimerase from Enterobacter sp. (strain 638).